The primary structure comprises 447 residues: N-succinylarginine dihydrolase (447 aa).

Residues 21-30, Asn-112, and 139-140 each bind substrate; these read AGLAHGNVAS and HR. The active site involves Glu-176. Arg-215 is a binding site for substrate. Residue His-251 is part of the active site. Residues Asp-253 and Asn-364 each contribute to the substrate site. The active-site Nucleophile is the Cys-370.

Belongs to the succinylarginine dihydrolase family. As to quaternary structure, homodimer.

It catalyses the reaction N(2)-succinyl-L-arginine + 2 H2O + 2 H(+) = N(2)-succinyl-L-ornithine + 2 NH4(+) + CO2. The protein operates within amino-acid degradation; L-arginine degradation via AST pathway; L-glutamate and succinate from L-arginine: step 2/5. Its function is as follows. Catalyzes the hydrolysis of N(2)-succinylarginine into N(2)-succinylornithine, ammonia and CO(2). The chain is N-succinylarginine dihydrolase from Chromohalobacter salexigens (strain ATCC BAA-138 / DSM 3043 / CIP 106854 / NCIMB 13768 / 1H11).